Consider the following 292-residue polypeptide: MEMO1 family protein PF1638 (292 aa).

Belongs to the MEMO1 family.

This is MEMO1 family protein PF1638 from Pyrococcus furiosus (strain ATCC 43587 / DSM 3638 / JCM 8422 / Vc1).